The chain runs to 248 residues: Probable transcriptional regulatory protein Mrad2831_3553 (248 aa).

It belongs to the TACO1 family.

It is found in the cytoplasm. This is Probable transcriptional regulatory protein Mrad2831_3553 from Methylobacterium radiotolerans (strain ATCC 27329 / DSM 1819 / JCM 2831 / NBRC 15690 / NCIMB 10815 / 0-1).